A 506-amino-acid chain; its full sequence is Sodium transporter HKT1 (506 aa).

The Cytoplasmic segment spans residues 1–19 (MDRVVAKIAKIRSQLTKLR). A helical transmembrane segment spans residues 20-40 (SLFFLYFIYFLFFSFLGFLAL). Residues 41–81 (KITKPRTTSRPHDFDLFFTSVSAITVSSMSTVDMEVFSNTQ) are Extracellular-facing. The helical transmembrane segment at 82 to 102 (LIFLTILMFLGGEIFTSFLNL) threads the bilayer. Residues 103–159 (YVSYFTKFVFPHNKIRHILGSYNSDSSIEDRCDVETVTDYREGLIKIDERASKCLYS) lie on the Cytoplasmic side of the membrane. The helical transmembrane segment at 160-180 (VVLSYHLVTNLVGSVLLLVYV) threads the bilayer. The Extracellular segment spans residues 181–232 (NFVKTARDVLSSKEISPLTFSVFTTVSTFANCGFVPTNENMIIFRKNSGLIW). Residues 233-253 (LLIPQVLMGNTLFPCFLVLLI) form a helical membrane-spanning segment. Residues 254 to 286 (WGLYKITKRDEYGYILKNHNKMGYSHLLSVRLC) lie on the Cytoplasmic side of the membrane. A helical membrane pass occupies residues 287-307 (VLLGVTVLGFLIIQLLFFCAF). Residues 308 to 348 (EWTSESLEGMSSYEKLVGSLFQVVNSRHTGETIVDLSTLSP) lie on the Extracellular side of the membrane. Residues 349–369 (AILVLFILMMYLPPYTLFMPL) form a helical membrane-spanning segment. Topologically, residues 370–392 (TEQKTIEKEGGDDDSENGKKVKK) are cytoplasmic. Residues 393–413 (SGLIVSQLSFLTICIFLISIT) traverse the membrane as a helical segment. Residues 414 to 465 (ERQNLQRDPINFNVLNITLEVISAYGNVGFTTGYSCERRVDISDGGCKDASY) lie on the Extracellular side of the membrane. Asparagine 429 carries N-linked (GlcNAc...) asparagine glycosylation. A helical transmembrane segment spans residues 466-486 (GFAGRWSPMGKFVLIIVMFYG). At 487 to 506 (RFKQFTAKSGRAWILYPSSS) the chain is on the cytoplasmic side.

Belongs to the TrkH potassium transport family. HKT (TC 2.A.38.3) subfamily. N-glycosylated. Not essential for functional expression and membrane targeting. In terms of tissue distribution, highly expressed in roots. Expressed in flowers, leaves and stems. Expressed in the vascular tissues of every organs. In roots, leaves and flower peduncles, it is only expressed in the phloem tissues. Not expressed in root peripheral cells.

It localises to the cell membrane. It carries out the reaction Na(+)(in) = Na(+)(out). Sodium transporter protein, which plays a central role in plant tolerance to salt. Upon prolongated exposure to high concentrations, Na(+) translocates from the roots to the transpiring leaves where it can increase to toxic level. Involved in Na(+) recirculation from shoots to roots, probably by mediating Na(+) loading into the phloem sap in shoots and unloading in roots, thereby removing large amounts of Na(+) from the shoot. Does not transport K(+) but regulates K(+) nutrient status via its ability to facilitate Na(+) homeostasis. Probably not involved in root uptake of Na(+). This is Sodium transporter HKT1 (HKT1) from Arabidopsis thaliana (Mouse-ear cress).